We begin with the raw amino-acid sequence, 200 residues long: Holliday junction branch migration complex subunit RuvA (200 aa).

Residues 1-63 (MIGKLSGKID…EEHIHLYGFL (63 aa)) are domain I. Residues 64–142 (TLEEKNFFNL…KIFSSSAIIK (79 aa)) are domain II. The tract at residues 142-146 (KDSSN) is flexible linker. The interval 147-200 (ISSVEINEVIKALVNLGFTRFEAQNTVQGIITQNTKISIDELIKTALKNRNSSF) is domain III.

Belongs to the RuvA family. In terms of assembly, homotetramer. Forms an RuvA(8)-RuvB(12)-Holliday junction (HJ) complex. HJ DNA is sandwiched between 2 RuvA tetramers; dsDNA enters through RuvA and exits via RuvB. An RuvB hexamer assembles on each DNA strand where it exits the tetramer. Each RuvB hexamer is contacted by two RuvA subunits (via domain III) on 2 adjacent RuvB subunits; this complex drives branch migration. In the full resolvosome a probable DNA-RuvA(4)-RuvB(12)-RuvC(2) complex forms which resolves the HJ.

Its subcellular location is the cytoplasm. Functionally, the RuvA-RuvB-RuvC complex processes Holliday junction (HJ) DNA during genetic recombination and DNA repair, while the RuvA-RuvB complex plays an important role in the rescue of blocked DNA replication forks via replication fork reversal (RFR). RuvA specifically binds to HJ cruciform DNA, conferring on it an open structure. The RuvB hexamer acts as an ATP-dependent pump, pulling dsDNA into and through the RuvAB complex. HJ branch migration allows RuvC to scan DNA until it finds its consensus sequence, where it cleaves and resolves the cruciform DNA. The sequence is that of Holliday junction branch migration complex subunit RuvA from Rickettsia typhi (strain ATCC VR-144 / Wilmington).